Consider the following 244-residue polypeptide: Phosphoadenosine 5'-phosphosulfate reductase (244 aa).

C239 acts as the Nucleophile; cysteine thiosulfonate intermediate in catalysis.

Belongs to the PAPS reductase family. CysH subfamily.

The protein localises to the cytoplasm. The enzyme catalyses [thioredoxin]-disulfide + sulfite + adenosine 3',5'-bisphosphate + 2 H(+) = [thioredoxin]-dithiol + 3'-phosphoadenylyl sulfate. It functions in the pathway sulfur metabolism; hydrogen sulfide biosynthesis; sulfite from sulfate: step 3/3. In terms of biological role, catalyzes the formation of sulfite from phosphoadenosine 5'-phosphosulfate (PAPS) using thioredoxin as an electron donor. The protein is Phosphoadenosine 5'-phosphosulfate reductase of Salmonella newport (strain SL254).